The sequence spans 299 residues: Protease HtpX homolog (299 aa).

2 consecutive transmembrane segments (helical) span residues 15-35 (ILLL…GYLF) and 39-59 (GLGG…SMIF). Position 143 (His143) interacts with Zn(2+). Glu144 is a catalytic residue. His147 serves as a coordination point for Zn(2+). Transmembrane regions (helical) follow at residues 158 to 178 (IAVA…RMMW) and 198 to 218 (IIML…ATLV). Glu227 contacts Zn(2+).

It belongs to the peptidase M48B family. Zn(2+) is required as a cofactor.

It is found in the cell membrane. The protein is Protease HtpX homolog of Streptococcus pneumoniae serotype 19F (strain G54).